Here is a 1140-residue protein sequence, read N- to C-terminus: MQREVGPQVAPPMFLHQIQPLPPHATAAKKRGNPWPAAAVAAAEAKGGGNWNPRMWDWDSRALTAKPSSDALRVNAGLSHHQQQQQQSPPAAAKAAEALRQGGGGSGGLNLQLGLREDAATPMDVSPAATTVSSSPSPPASSAPAQEPVVRPSKRVRSGSPGSASGGGGGGGGGGNSGGGGGSYPMCQVDDCRADLTNAKDYHRRHKVCEIHGKTTKALVGNQMQRFCQQCSRFHPLSEFDEGKRSCRRRLAGHNRRRRKTQPTDVASQLLLPGNQENAANRTQDIVNLITVIARLQGSNVGKLPSIPPIPDKDNLVQIISKINSINNGNSASKSPPSEAVDLNASHSQQQDSVQRTTNGFEKQTNGLDKQTNGFDKQADGFDKQAVPSTMDLLAVLSTALATSNPDSNTSQSQGSSDSSGNNKSKSQSTEPANVVNSHEKSIRVFSATRKNDALERSPEMYKQPDQETPPYLSLRLFGSTEEDVPCKMDTANKYLSSESSNPLDERSPSSSPPVTHKFFPIRSVDEDARIADYGEDIATVEVSTSRAWRAPPLELFKDSERPIENGSPPNPAYQSCYTSTSCSDHSPSTSNSDGQDRTGRIIFKLFGKEPSTIPGNLRGEIVNWLKHSPNEMEGYIRPGCLVLSMYLSMPAIAWDELEENLLQRVNTLVQGSDLDFWRKGRFLVRTDAQLVSYKDGATRLSKSWRTWNTPELTFVSPIAVVGGRKTSLILKGRNLTIPGTQIHCTSTGKYISKEVLCSAYPGTIYDDSGVETFDLPGEPHLILGRYFIEVENRFRGNSFPVIIANSSVCQELRSLEAELEGSQFVDGSSDDQAHDARRLKPKDEVLHFLNELGWLFQKAAASTSAEKSDSSGLDLMYFSTARFRYLLLFSSERDWCSLTKTLLEILAKRSLASDELSQETLEMLSEIHLLNRAVKRKSSHMARLLVQFVVVCPDDSKLYPFLPNVAGPGGLTPLHLAASIEDAVDIVDALTDDPQQIGLSCWHSALDDDGQSPETYAKLRNNNAYNELVAQKLVDRKNNQVTIMVGKEEIHMDQSGNVGEKNKSAIQALQIRSCNQCAILDAGLLRRPMHSRGLLARPYIHSMLAIAAVCVCVCVFMRALLRFNSGRSFKWERLDFGTI.

Disordered stretches follow at residues 73–112 (RVNAGLSHHQQQQQQSPPAAAKAAEALRQGGGGSGGLNLQ) and 124–177 (DVSP…GGNS). Composition is skewed to low complexity over residues 76-100 (AGLSHHQQQQQQSPPAAAKAAEALR) and 125-135 (VSPAATTVSSS). The segment covering 164–177 (ASGGGGGGGGGGNS) has biased composition (gly residues). The SBP-type zinc finger occupies 184–261 (YPMCQVDDCR…AGHNRRRRKT (78 aa)). 8 residues coordinate Zn(2+): cysteine 187, cysteine 192, cysteine 209, histidine 212, cysteine 228, cysteine 231, histidine 235, and cysteine 247. Residues 244–260 (KRSCRRRLAGHNRRRRK) carry the Bipartite nuclear localization signal motif. Disordered stretches follow at residues 327–382 (NNGN…ADGF), 403–472 (TSNP…TPPY), 496–517 (LSSESSNPLDERSPSSSPPVTH), and 558–597 (KDSERPIENGSPPNPAYQSCYTSTSCSDHSPSTSNSDGQD). Over residues 345-375 (ASHSQQQDSVQRTTNGFEKQTNGLDKQTNGF) the composition is skewed to polar residues. The segment covering 403–430 (TSNPDSNTSQSQGSSDSSGNNKSKSQST) has biased composition (low complexity). Residues 450–466 (RKNDALERSPEMYKQPD) are compositionally biased toward basic and acidic residues. Positions 496–514 (LSSESSNPLDERSPSSSPP) are enriched in polar residues. Low complexity predominate over residues 579–593 (TSTSCSDHSPSTSNS).

As to expression, expressed in stems, leaf sheaths, and young panicles.

The protein resides in the nucleus. In terms of biological role, trans-acting factor that binds specifically to the consensus nucleotide sequence 5'-TNCGTACAA-3'. This is Squamosa promoter-binding-like protein 15 (SPL15) from Oryza sativa subsp. indica (Rice).